The primary structure comprises 275 residues: 2,3,4,5-tetrahydropyridine-2,6-dicarboxylate N-succinyltransferase (275 aa).

Residues Arg106 and Asp143 each coordinate substrate.

The protein belongs to the transferase hexapeptide repeat family. As to quaternary structure, homotrimer.

The protein resides in the cytoplasm. The enzyme catalyses (S)-2,3,4,5-tetrahydrodipicolinate + succinyl-CoA + H2O = (S)-2-succinylamino-6-oxoheptanedioate + CoA. It participates in amino-acid biosynthesis; L-lysine biosynthesis via DAP pathway; LL-2,6-diaminopimelate from (S)-tetrahydrodipicolinate (succinylase route): step 1/3. This chain is 2,3,4,5-tetrahydropyridine-2,6-dicarboxylate N-succinyltransferase, found in Burkholderia pseudomallei (strain 1106a).